A 40-amino-acid chain; its full sequence is Photosystem II reaction center protein J (40 aa).

A helical membrane pass occupies residues 8 to 28; that stretch reads IPLWIIGTVTGIIVIGLIGIF.

Belongs to the PsbJ family. As to quaternary structure, PSII is composed of 1 copy each of membrane proteins PsbA, PsbB, PsbC, PsbD, PsbE, PsbF, PsbH, PsbI, PsbJ, PsbK, PsbL, PsbM, PsbT, PsbX, PsbY, PsbZ, Psb30/Ycf12, at least 3 peripheral proteins of the oxygen-evolving complex and a large number of cofactors. It forms dimeric complexes.

It is found in the plastid. It localises to the chloroplast thylakoid membrane. Functionally, one of the components of the core complex of photosystem II (PSII). PSII is a light-driven water:plastoquinone oxidoreductase that uses light energy to abstract electrons from H(2)O, generating O(2) and a proton gradient subsequently used for ATP formation. It consists of a core antenna complex that captures photons, and an electron transfer chain that converts photonic excitation into a charge separation. The protein is Photosystem II reaction center protein J of Morus indica (Mulberry).